The primary structure comprises 100 residues: Small ribosomal subunit protein uS14c (100 aa).

The protein belongs to the universal ribosomal protein uS14 family. As to quaternary structure, part of the 30S ribosomal subunit.

It is found in the plastid. It localises to the chloroplast. In terms of biological role, binds 16S rRNA, required for the assembly of 30S particles. In Lactuca sativa (Garden lettuce), this protein is Small ribosomal subunit protein uS14c.